Here is a 255-residue protein sequence, read N- to C-terminus: tRNA (guanine-N(1)-)-methyltransferase (255 aa).

S-adenosyl-L-methionine-binding positions include G113 and 133 to 138; that span reads IGDYVL.

The protein belongs to the RNA methyltransferase TrmD family. In terms of assembly, homodimer.

Its subcellular location is the cytoplasm. The enzyme catalyses guanosine(37) in tRNA + S-adenosyl-L-methionine = N(1)-methylguanosine(37) in tRNA + S-adenosyl-L-homocysteine + H(+). Specifically methylates guanosine-37 in various tRNAs. The sequence is that of tRNA (guanine-N(1)-)-methyltransferase from Escherichia coli O81 (strain ED1a).